Here is a 482-residue protein sequence, read N- to C-terminus: Catalase (482 aa).

A compositionally biased stretch (polar residues) spans 1–23; sequence MSQNKTLTTASGPPVADNQNSRS. A disordered region spans residues 1–28; sequence MSQNKTLTTASGPPVADNQNSRSAGPRG. Residues H55 and N128 contribute to the active site. A heme-binding site is contributed by Y338. The interval 370-395 is disordered; the sequence is SMAFGSNGGAAPNYEPNSYADAPKQA.

Belongs to the catalase family. Heme serves as cofactor.

It carries out the reaction 2 H2O2 = O2 + 2 H2O. Functionally, decomposes hydrogen peroxide into water and oxygen; serves to protect cells from the toxic effects of hydrogen peroxide. This chain is Catalase (cat), found in Onchocerca volvulus endobacterium.